Reading from the N-terminus, the 568-residue chain is Estrogen receptor beta (568 aa).

The tract at residues Met1–Tyr177 is modulating. 2 consecutive NR C4-type zinc fingers follow at residues Cys178–Cys198 and Cys214–Cys238. The segment at residues Cys178–Met243 is a DNA-binding region (nuclear receptor). The NR LBD domain occupies Thr300 to His536.

This sequence belongs to the nuclear hormone receptor family. NR3 subfamily. In terms of assembly, binds DNA as a homodimer. Can form a heterodimer with ER-alpha.

It is found in the nucleus. Its function is as follows. Binds estrogens with an affinity similar to that of ER-alpha, and activates expression of reporter genes containing estrogen response elements (ERE) in an estrogen-dependent manner. The sequence is that of Estrogen receptor beta (esr2) from Oncorhynchus mykiss (Rainbow trout).